The primary structure comprises 854 residues: Probable inactive serine/threonine-protein kinase DDB_G0274821 (854 aa).

The region spanning 1-266 is the Protein kinase domain; that stretch reads MPIKESFKRI…WPKLFIHPFF (266 aa). N-linked (GlcNAc...) asparagine glycans are attached at residues asparagine 32 and asparagine 106. A disordered region spans residues 116–135; the sequence is NNNNNNNNNNNNNNNNNNNN. N-linked (GlcNAc...) asparagine glycans are attached at residues asparagine 163, asparagine 279, asparagine 283, and asparagine 290. A disordered region spans residues 289-331; it reads LNKSSSSSSSSSSSSSSSSSSSSSSSLSFQQQQQPNNISSPNL. Residues 292–322 show a composition bias toward low complexity; the sequence is SSSSSSSSSSSSSSSSSSSSSSSLSFQQQQQ. Asparagine 325, asparagine 347, and asparagine 365 each carry an N-linked (GlcNAc...) asparagine glycan. The segment at 384-408 is disordered; the sequence is IISPNRPSSPPLSSLSSCSSSSSSS. N-linked (GlcNAc...) asparagine glycosylation occurs at asparagine 414. Positions 425–446 are disordered; that stretch reads NNNNNNNNNNNNNNNNNNNNNN. 3 N-linked (GlcNAc...) asparagine glycosylation sites follow: asparagine 520, asparagine 541, and asparagine 620. Residues 627 to 650 are disordered; that stretch reads SSPPPSSSSSSSSPSSPSSTSPSL. Residues 633–650 show a composition bias toward low complexity; the sequence is SSSSSSSPSSPSSTSPSL. A glycan (N-linked (GlcNAc...) asparagine) is linked at asparagine 757. A helical membrane pass occupies residues 770–792; the sequence is HWRVQISFLNILFILITINNNFI.

It belongs to the protein kinase superfamily. Ser/Thr protein kinase family.

It localises to the membrane. The protein is Probable inactive serine/threonine-protein kinase DDB_G0274821 of Dictyostelium discoideum (Social amoeba).